The sequence spans 305 residues: Small ribosomal subunit biogenesis GTPase RsgA (305 aa).

In terms of domain architecture, CP-type G spans 67–224 (SSELVRPAVA…VADTPGFSSF (158 aa)). Residues 116-119 (NKID) and 166-174 (GQSGVGKST) each bind GTP. Residues cysteine 248, cysteine 253, histidine 255, and cysteine 261 each coordinate Zn(2+).

Belongs to the TRAFAC class YlqF/YawG GTPase family. RsgA subfamily. In terms of assembly, monomer. Associates with 30S ribosomal subunit, binds 16S rRNA. Requires Zn(2+) as cofactor.

The protein localises to the cytoplasm. In terms of biological role, one of several proteins that assist in the late maturation steps of the functional core of the 30S ribosomal subunit. Helps release RbfA from mature subunits. May play a role in the assembly of ribosomal proteins into the subunit. Circularly permuted GTPase that catalyzes slow GTP hydrolysis, GTPase activity is stimulated by the 30S ribosomal subunit. The sequence is that of Small ribosomal subunit biogenesis GTPase RsgA from Ruminiclostridium cellulolyticum (strain ATCC 35319 / DSM 5812 / JCM 6584 / H10) (Clostridium cellulolyticum).